We begin with the raw amino-acid sequence, 240 residues long: Aldehyde dehydrogenase, cytosolic 2 (240 aa).

Active-site residues include E8 and C42. 4 positions are modified to N6-acetyllysine: K106, K149, K151, and K174.

This sequence belongs to the aldehyde dehydrogenase family. Homotetramer. In terms of tissue distribution, non-lens specific, predominant form expressed in the liver.

The protein resides in the cytoplasm. It catalyses the reaction an aldehyde + NAD(+) + H2O = a carboxylate + NADH + 2 H(+). It participates in alcohol metabolism; ethanol degradation; acetate from ethanol: step 2/2. Functionally, elephant shrews, in contrast to other mammals, possess both a lens- and a non-lens specific class-1 aldehyde dehydrogenase. Can convert/oxidize retinaldehyde to retinoic acid. The chain is Aldehyde dehydrogenase, cytosolic 2 from Macroscelides proboscideus (Short-eared elephant shrew).